We begin with the raw amino-acid sequence, 177 residues long: Basic form of pathogenesis-related protein 1 (177 aa).

An N-terminal signal peptide occupies residues 1–23 (MGFLTTIVACFITFAILIHSSKA). Position 24 is a pyrrolidone carboxylic acid (glutamine 24). Residues 31 to 147 (LNPHNAARRQ…NGWFFITCNY (117 aa)) form the SCP domain.

The protein belongs to the CRISP family. In terms of processing, two disulfide bonds are present.

Its function is as follows. Probably involved in the defense reaction of plants against pathogens. This chain is Basic form of pathogenesis-related protein 1, found in Nicotiana tabacum (Common tobacco).